We begin with the raw amino-acid sequence, 508 residues long: Probable metalloreductase AIM14 (508 aa).

8 helical membrane passes run 18-38, 70-90, 100-120, 137-157, 168-188, 198-218, 222-242, and 347-367; these read LPYG…LIVM, PLLL…VAYI, LSYV…NPIL, FVTV…SLDP, LFNF…FASV, SFYV…PIHA, VTVP…ISYI, and VAIV…KYLQ. The Ferric oxidoreductase domain occupies 97-214; it reads LGRLSYVLVI…LGQWAMVFLV (118 aa). Residues 241–361 enclose the FAD-binding FR-type domain; it reads YIYYSTTVNV…GGSGISFGLS (121 aa).

This sequence belongs to the ferric reductase (FRE) family. AIM14 subfamily.

The protein localises to the membrane. Functionally, probable cell surface metalloreductase. May be involved in iron or copper homeostasis. The chain is Probable metalloreductase AIM14 (AIM14) from Kluyveromyces lactis (strain ATCC 8585 / CBS 2359 / DSM 70799 / NBRC 1267 / NRRL Y-1140 / WM37) (Yeast).